The following is a 1163-amino-acid chain: Hamartin (1163 aa).

A Glycyl lysine isopeptide (Lys-Gly) (interchain with G-Cter in ubiquitin) cross-link involves residue K30. Residues 295-316 (SSYVDTQNSYGGATSTPSSTSR) show a composition bias toward polar residues. Disordered regions lie at residues 295–337 (SSYV…STRP) and 353–594 (CGMT…QRGV). The span at 321–337 (STPGQLPQSLSSLSTRP) shows a compositional bias: low complexity. Over residues 393-402 (TSPPPAPPCP) the composition is skewed to pro residues. A mediates interaction with WDR45B region spans residues 403–787 (QDDCAHGPAS…QIRQLQHDRE (385 aa)). Positions 474–487 (EKDKEEAAISKELS) are enriched in basic and acidic residues. S487, S505, S511, S521, S595, and S598 each carry phosphoserine. Polar residues predominate over residues 512–530 (LSGSQRKTHSAASGTQGFS). Coiled coils occupy residues 721–919 (RKVI…LAKK) and 970–994 (EKDG…ERLD). Over residues 1008-1020 (NEEAAGHNGETRT) the composition is skewed to basic and acidic residues. The interval 1008–1163 (NEEAAGHNGE…DYNETHHEHS (156 aa)) is disordered. Low complexity predominate over residues 1029 to 1046 (SCGGRVTGGSSSSSSELS). Over residues 1066–1083 (EPSSSIPTTVGSLPSSKS) the composition is skewed to polar residues. Basic and acidic residues predominate over residues 1088-1099 (KTRELFRNKSES). Residue S1097 is modified to Phosphoserine. The span at 1131-1146 (PPSLDAPHPSSPSSDS) shows a compositional bias: low complexity. Positions 1154 to 1163 (DYNETHHEHS) are enriched in basic and acidic residues.

Component of the TSC-TBC complex (also named Rhebulator complex), composed of 2 molecules of TSC1, 2 molecules of TSC2 and 1 molecule of TBC1D7. Probably forms a complex composed of chaperones HSP90 and HSP70, co-chaperones STIP1/HOP, CDC37, PPP5C, PTGES3/p23, TSC1 and client protein TSC2. Forms a complex composed of chaperones HSP90 and HSP70, co-chaperones CDC37, PPP5C, TSC1 and client protein TSC2, CDK4, AKT, RAF1 and NR3C1; this complex does not contain co-chaperones STIP1/HOP and PTGES3/p23. Forms a complex containing HSP90AA1, TSC1 and TSC2; TSC1 is required to recruit TCS2 to the complex. Interacts (via C-terminus) with the closed form of HSP90AA1 (via the middle domain and TPR repeat-binding motif). Interacts with DOCK7. Interacts with FBXW5. Interacts with WDR45B. Interacts with RPAP3 and URI1. In terms of processing, phosphorylation at Ser-505 does not affect interaction with TSC2. Post-translationally, 'Lys-63'-linked ubiquitinated at Lys-30 by PELI1; the ubiquitination promotes TSC1/TSC2 complex stability. Highly expressed in brain, spleen and kidney, followed by liver and heart.

It is found in the lysosome membrane. It localises to the cytoplasm. The protein resides in the cytosol. Its function is as follows. Non-catalytic component of the TSC-TBC complex, a multiprotein complex that acts as a negative regulator of the canonical mTORC1 complex, an evolutionarily conserved central nutrient sensor that stimulates anabolic reactions and macromolecule biosynthesis to promote cellular biomass generation and growth. The TSC-TBC complex acts as a GTPase-activating protein (GAP) for the small GTPase RHEB, a direct activator of the protein kinase activity of mTORC1. In absence of nutrients, the TSC-TBC complex inhibits mTORC1, thereby preventing phosphorylation of ribosomal protein S6 kinase (RPS6KB1 and RPS6KB2) and EIF4EBP1 (4E-BP1) by the mTORC1 signaling. The TSC-TBC complex is inactivated in response to nutrients, relieving inhibition of mTORC1. Within the TSC-TBC complex, TSC1 stabilizes TSC2 and prevents TSC2 self-aggregation. Involved in microtubule-mediated protein transport via its ability to regulate mTORC1 signaling. Also acts as a co-chaperone for HSP90AA1 facilitating HSP90AA1 chaperoning of protein clients such as kinases, TSC2 and glucocorticoid receptor NR3C1. Increases ATP binding to HSP90AA1 and inhibits HSP90AA1 ATPase activity. Competes with the activating co-chaperone AHSA1 for binding to HSP90AA1, thereby providing a reciprocal regulatory mechanism for chaperoning of client proteins. Recruits TSC2 to HSP90AA1 and stabilizes TSC2 by preventing the interaction between TSC2 and ubiquitin ligase HERC1. The sequence is that of Hamartin from Rattus norvegicus (Rat).